We begin with the raw amino-acid sequence, 368 residues long: Protein tesmin/TSO1-like CXC 8 (368 aa).

The 122-residue stretch at 64–185 (KHKGCRCKQS…KCINCKNVSE (122 aa)) folds into the CRC domain.

This sequence belongs to the lin-54 family.

The protein localises to the nucleus. Functionally, plays a role in development of both male and female reproductive tissues. The sequence is that of Protein tesmin/TSO1-like CXC 8 (TCX8) from Arabidopsis thaliana (Mouse-ear cress).